The following is a 150-amino-acid chain: Nucleoside diphosphate kinase (150 aa).

6 residues coordinate ATP: Lys-9, Phe-57, Arg-85, Thr-91, Arg-102, and Asn-112. His-115 serves as the catalytic Pros-phosphohistidine intermediate.

The protein belongs to the NDK family. It depends on Mg(2+) as a cofactor.

The protein localises to the cytoplasm. The catalysed reaction is a 2'-deoxyribonucleoside 5'-diphosphate + ATP = a 2'-deoxyribonucleoside 5'-triphosphate + ADP. The enzyme catalyses a ribonucleoside 5'-diphosphate + ATP = a ribonucleoside 5'-triphosphate + ADP. Major role in the synthesis of nucleoside triphosphates other than ATP. The ATP gamma phosphate is transferred to the NDP beta phosphate via a ping-pong mechanism, using a phosphorylated active-site intermediate. This is Nucleoside diphosphate kinase from Methanothermobacter thermautotrophicus (strain ATCC 29096 / DSM 1053 / JCM 10044 / NBRC 100330 / Delta H) (Methanobacterium thermoautotrophicum).